A 487-amino-acid polypeptide reads, in one-letter code: DNA polymerase delta small subunit (487 aa).

M1 bears the N-acetylmethionine mark. Phosphoserine is present on S20.

The protein belongs to the DNA polymerase delta/II small subunit family. In terms of assembly, DNA polymerase delta is a heterotrimer of POL3, POL32 and HYS2.

It localises to the nucleus. It catalyses the reaction DNA(n) + a 2'-deoxyribonucleoside 5'-triphosphate = DNA(n+1) + diphosphate. Its function is as follows. DNA polymerase delta (DNA polymerase III) participates in chromosomal DNA replication. It is required during synthesis of the leading and lagging DNA strands at the replication fork and binds at/or near replication origins and moves along DNA with the replication fork. It has 3'-5' proofreading exonuclease activity that correct errors arising during DNA replication. It is also involved in DNA synthesis during DNA repair. The chain is DNA polymerase delta small subunit (POL31) from Saccharomyces cerevisiae (strain ATCC 204508 / S288c) (Baker's yeast).